Reading from the N-terminus, the 226-residue chain is Urease accessory protein UreF (226 aa).

The protein belongs to the UreF family. As to quaternary structure, ureD, UreF and UreG form a complex that acts as a GTP-hydrolysis-dependent molecular chaperone, activating the urease apoprotein by helping to assemble the nickel containing metallocenter of UreC. The UreE protein probably delivers the nickel.

The protein localises to the cytoplasm. Its function is as follows. Required for maturation of urease via the functional incorporation of the urease nickel metallocenter. This chain is Urease accessory protein UreF, found in Burkholderia ambifaria (strain MC40-6).